The following is a 145-amino-acid chain: Peptidyl-lysine N-acetyltransferase YjaB (145 aa).

An N-acetyltransferase domain is found at 3 to 144 (INIRRSRHEE…KPYPLLNLIY (142 aa)).

It belongs to the acetyltransferase family.

It catalyses the reaction L-lysyl-[protein] + acetyl-CoA = N(6)-acetyl-L-lysyl-[protein] + CoA + H(+). Functionally, N-epsilon-lysine acetyltransferase that catalyzes acetylation of a large number of proteins. The protein is Peptidyl-lysine N-acetyltransferase YjaB (yjaB) of Salmonella typhimurium (strain LT2 / SGSC1412 / ATCC 700720).